The sequence spans 1279 residues: MSGTKWTDEQRQAIFTKDCNLLVAAGAGAGKTAVLVQRIIEKILDKGEPIDIDKLLVVTFTNAAAAEMRERIGDAISKGLDEDPESKVLRKQLTLLNKSNIMTIHSFCLQVIKNNFHTMEIDPNFRICDETEGILMKQEAIDELFDELYEIENEDFINLVESYASRKDTRLQEVVLELHRFAKSAPFSYDWLLNMAEEFNVGEEFNFEETPWADMIMEDMKVLLHGFKNMLQQSIDVILNSEGIDYYYEPFKMDLSFINSLLEKSSFKEFRGEIIAYDFPKLPLKRNKDADKEAKERVKKLRDKVKKKIVELKNILDSYENEFIKKEFIFLYPSMKALSNLVILFDKKYEAKKRERDLIDFNDIEHLCLSILTDKNSEGHIIPSDIALDYRKKFAEVLIDEYQDSNLVQEVIMSMVSRVKGYWSFYNGQLMFNEEEINLEEPQICLDIPNRFMVGDVKQSIYRFRQAKPEIFLDKYNEYSEEEGTKNRKVKLFKNFRSRKEVINGVNYLFKQIMSKTIGELDYTEEEALKVGASYGEEVKGEPIELCLMDKKYEISEEVLKEYNVDEEEALDNIQLEGRLVAKKIQKLVGNNLEGGLKVFDKKLGEYRNLQYRDIVILMRATSNWAPIFVEELAKEGIPVFADTNSGYFDTAEIKTMISLLQIIDNPLQDIPLLSVLRSPIASFTDDELIDIRMVNKNITFYECMEIIYRLYKNEKLDSYYSFYIEDENKINKIIKDMNEKLKNKICSFIEKLKLWREKSIHIDIDEFIWFLYVETGYYGYAGALQAGEQRQANLRILFQRAKQYAKTSYKGLFNFINFINKLKFSSGDMGSAKILGENENVVRIMSIHKSKGLEFPVVILSGTGKNFNMTDLNKNILFHRDLGYGPDYVDTERRIAYPSLVKNIIKNKIRLETLSEEMRILYVALTRAREKLIITGLINNMDKTVEDWLNLSEDKNKVPEYAVMSGKTYLDWIGPALIKHKDAVSFREELKMTSELSNIVDDKSKWKIELWNKRELLKEKVEEDEVEISEKIKETLMNLEESNYKEEIYKRLSFKYKYDNASSIPTKLSVSDVKKQFILDEKENTEELFKKLELRKPMFMEEKKKISPSERGTIIHLFMQHLDLKKAENEEDIKEQINRLIEREFITYEQSKVISPYKILKFCRGELGKRILNSNNVNKEMPFSIEIPALEIYKELDKEIYKDEKLIIQGVIDCYFEEEDGLVLLDYKTDYVNDIEEIKNRYEIQIKYYEEALNRITGKNVKDKYLYLFSVDNYIKID.

The 496-residue stretch at 4 to 499 folds into the UvrD-like helicase ATP-binding domain; that stretch reads TKWTDEQRQA…VKLFKNFRSR (496 aa). An ATP-binding site is contributed by 25–32; that stretch reads AGAGAGKT. A UvrD-like helicase C-terminal domain is found at 526-853; the sequence is EEALKVGASY…RIMSIHKSKG (328 aa).

This sequence belongs to the helicase family. AddA subfamily. As to quaternary structure, heterodimer of AddA and AddB/RexB. Mg(2+) serves as cofactor.

The catalysed reaction is Couples ATP hydrolysis with the unwinding of duplex DNA by translocating in the 3'-5' direction.. It catalyses the reaction ATP + H2O = ADP + phosphate + H(+). The heterodimer acts as both an ATP-dependent DNA helicase and an ATP-dependent, dual-direction single-stranded exonuclease. Recognizes the chi site generating a DNA molecule suitable for the initiation of homologous recombination. The AddA nuclease domain is required for chi fragment generation; this subunit has the helicase and 3' -&gt; 5' nuclease activities. This chain is ATP-dependent helicase/nuclease subunit A, found in Clostridium botulinum (strain ATCC 19397 / Type A).